Here is a 350-residue protein sequence, read N- to C-terminus: Phosphoribosylformylglycinamidine cyclo-ligase (350 aa).

The protein belongs to the AIR synthase family.

The protein resides in the cytoplasm. The enzyme catalyses 2-formamido-N(1)-(5-O-phospho-beta-D-ribosyl)acetamidine + ATP = 5-amino-1-(5-phospho-beta-D-ribosyl)imidazole + ADP + phosphate + H(+). It functions in the pathway purine metabolism; IMP biosynthesis via de novo pathway; 5-amino-1-(5-phospho-D-ribosyl)imidazole from N(2)-formyl-N(1)-(5-phospho-D-ribosyl)glycinamide: step 2/2. This is Phosphoribosylformylglycinamidine cyclo-ligase from Cupriavidus necator (strain ATCC 17699 / DSM 428 / KCTC 22496 / NCIMB 10442 / H16 / Stanier 337) (Ralstonia eutropha).